A 256-amino-acid polypeptide reads, in one-letter code: Protein YABBY 4 (256 aa).

The segment at 30-57 (CNCCDTILAVGVPCSSLFKTVTVRCGHC) adopts a C4-type zinc-finger fold. The interval 127 to 168 (SCASNAPAMQMPPAKPVQQEPELPKNAPASANRPPEKRQRVP) is disordered.

The protein belongs to the YABBY family. In terms of tissue distribution, preferentially expressed in immature organs containing meristems and organ primordia. Expressed in phloem of developing vascular tissues of young seedling shoots. Expressed in the phloem of midvein vasculature of young leaves. Does not show polar expression pattern in leaf primordia.

The protein localises to the nucleus. Functionally, seems to be associated with phloem cell differentiation. The sequence is that of Protein YABBY 4 (YAB4) from Oryza sativa subsp. japonica (Rice).